Reading from the N-terminus, the 648-residue chain is Threonine--tRNA ligase (648 aa).

Positions 1–61 (MIDIILPDGS…INTATVKAIT (61 aa)) constitute a TGS domain. Residues 243-549 (DHRKLGRELE…LIEHYSGKLP (307 aa)) are catalytic. Zn(2+)-binding residues include C349, H400, and H526.

It belongs to the class-II aminoacyl-tRNA synthetase family. In terms of assembly, homodimer. Zn(2+) serves as cofactor.

It localises to the cytoplasm. The enzyme catalyses tRNA(Thr) + L-threonine + ATP = L-threonyl-tRNA(Thr) + AMP + diphosphate + H(+). Catalyzes the attachment of threonine to tRNA(Thr) in a two-step reaction: L-threonine is first activated by ATP to form Thr-AMP and then transferred to the acceptor end of tRNA(Thr). Also edits incorrectly charged L-seryl-tRNA(Thr). This Orientia tsutsugamushi (strain Ikeda) (Rickettsia tsutsugamushi) protein is Threonine--tRNA ligase.